Reading from the N-terminus, the 1025-residue chain is MASSDLLSHLSATDRALFWKYGVGAEVSVPFQCVHHAFEFHAKSNPQLTAVDELGTTLSYGELDRRANCLASRLRSVGVVQGSRVCMLVERAVTLPVAVLGILKAGAAYIPLDGNIVSDSTLKHALVDSGSTVALTLRKFEHRLEGAPVPVVFLDDAICPSYNPSHCVKPRDTTTSKDSVYIIYTSGTTGTPKGVHVTHGNVTNLICIEPGQLGMKPGVRVSQMLNISFDFAAWEILGSLANGATLCPRGKTSKDWKAVMRSVDILFSTPSMLAPHNPVDYPNVKTVVVAGEACPKALADTWGARVKFWNACGPTEVTIANTMQLHIPGDIVTIGGPTPNNTAYVLDENMRPVPIGQTGVMWGGGAGITKGYLNLPDKTSERYVRDPFANDGSMMFNTGDLGKWVSNGTLQHLGRIDNQVKIKGFRVELDGVATAMETCAGVTGATALLIDGELWGFVKPSNISPEDIKAAAHKVQPYYAVPSKILTMDHFPETANGKTDKRVLQQMAIESKEEEAKLKEEKAAIPENVAWISLPPTVVTAPKTELTIPHRPSDHSLGSTNTKISAQVKEADSSASSTSELEKQEYIWSGYQDDDHPEKTQGRLVRNLRHQIFSLYRRLFSVVFIVNAAILIWICVKKEYDANRIGGIVIANVFIGVLMRQELVINTFFLIFTSIPSSWPLFIRRTAARVYHIGGIHSGAGVSSLLWLCLFTAQATKEMINGGKTSVRTVAITYVILAELLGIVIFAYPALRKRLHDTFENTHRFLGWSALALVWVQFMFLTIDYLPEGQMLGQTLVKTPQFWLVIILTCSVIWPWFRLRKVDVKPEVLSNHAVRLWFDYVTPPAGTFMRVSDAPLKEWHGFAAIPIPGRTGYSLVVSRAGDWTSKHIANPPTKLWVKGVPTYGVLKLVPMFRRMVIVATGSGIGPCAPAIFEKRIPMRVLWTAPNVRETFGDKLVDSILEANPEAVIYDTRKHGKPDMVKLTLRLVKEFNAEAVAIISNQPLTEKVVYGMMSRGIPAFGAIWDS.

The tract at residues 38 to 422 (FEFHAKSNPQ…LGRIDNQVKI (385 aa)) is adenylation (A) domain. AMP contacts are provided by residues 332–333 (VT) and 412–415 (HLGR). The tract at residues 556–638 (SLGSTNTKIS…AILIWICVKK (83 aa)) is thiolation and peptide carrier (T) domain. The thioester reductase (TR) domain stretch occupies residues 682 to 900 (FIRRTAARVY…PPTKLWVKGV (219 aa)). NADP(+) is bound by residues 685 to 688 (RTAA), 769 to 771 (SAL), and tyrosine 840.

Belongs to the adenylate-forming reductase family.

Its function is as follows. Adenylate-forming reductase, a natural product biosynthesis enzyme that resembles non-ribosomal peptide synthetases, yet serves to modify one substrate, rather than to condense two or more building blocks. The A-domain preferentially accepts L-serine, L-alanine and L-valine as substrates. The natural product of the enzyme is not yet known. The chain is Adenylate-forming reductase 03009 from Coprinopsis cinerea (strain Okayama-7 / 130 / ATCC MYA-4618 / FGSC 9003) (Inky cap fungus).